Reading from the N-terminus, the 350-residue chain is Heme A synthase (350 aa).

A run of 8 helical transmembrane segments spans residues 14–34 (VAIWLFLCSVMVILMVGIGGF), 95–115 (YVHRLVARLTGLVFVLPFIYF), 125–145 (VVIKLFVALLFGALQAFAGWY), 162–182 (LALHLLLALIIFALFSYQFFD), 202–222 (VGIILVLIMIQIIFGAFVAGL), 260–280 (VQFIHRALALLILTLVVILTV), 296–316 (IIQIILGVITLLLHIPIAIAI), and 317–337 (AHQVFSFILFGSSLYFLCYLR). Position 264 (histidine 264) interacts with heme. A heme-binding site is contributed by histidine 318.

This sequence belongs to the COX15/CtaA family. Type 2 subfamily. As to quaternary structure, interacts with CtaB. Heme b serves as cofactor.

The protein resides in the cell membrane. The catalysed reaction is Fe(II)-heme o + 2 A + H2O = Fe(II)-heme a + 2 AH2. It participates in porphyrin-containing compound metabolism; heme A biosynthesis; heme A from heme O: step 1/1. In terms of biological role, catalyzes the conversion of heme O to heme A by two successive hydroxylations of the methyl group at C8. The first hydroxylation forms heme I, the second hydroxylation results in an unstable dihydroxymethyl group, which spontaneously dehydrates, resulting in the formyl group of heme A. The protein is Heme A synthase of Wolbachia pipientis wMel.